A 190-amino-acid polypeptide reads, in one-letter code: Potassium-transporting ATPase KdpC subunit (190 aa).

A helical transmembrane segment spans residues 10–30; that stretch reads LLVFLTILTGGVYPLATTVLG.

It belongs to the KdpC family. In terms of assembly, the system is composed of three essential subunits: KdpA, KdpB and KdpC.

The protein resides in the cell inner membrane. Part of the high-affinity ATP-driven potassium transport (or Kdp) system, which catalyzes the hydrolysis of ATP coupled with the electrogenic transport of potassium into the cytoplasm. This subunit acts as a catalytic chaperone that increases the ATP-binding affinity of the ATP-hydrolyzing subunit KdpB by the formation of a transient KdpB/KdpC/ATP ternary complex. This Cronobacter sakazakii (strain ATCC BAA-894) (Enterobacter sakazakii) protein is Potassium-transporting ATPase KdpC subunit.